Consider the following 413-residue polypeptide: CinA-like protein (413 aa).

Belongs to the CinA family.

In Crocosphaera subtropica (strain ATCC 51142 / BH68) (Cyanothece sp. (strain ATCC 51142)), this protein is CinA-like protein.